Consider the following 971-residue polypeptide: Translation initiation factor IF-2 (971 aa).

Positions 49–63 are enriched in basic and acidic residues; that stretch reads HLRKSHGATDGDKRK. 2 disordered regions span residues 49–85 and 99–386; these read HLRK…KART and RDDV…PTEP. Positions 105–114 are enriched in low complexity; sequence GAEQGQAQVA. Basic and acidic residues predominate over residues 121–181; sequence ELKRREEEAR…EEEAAAKRAA (61 aa). Residues 182–200 are compositionally biased toward low complexity; sequence AEAAAAQQAAAQQAAAEQE. Basic and acidic residues predominate over residues 209-260; sequence DEARAAAERAAQREAAKKAEDAAREAADKARAEQEEISKRRAAAEAEARAIR. Over residues 303 to 325 the composition is skewed to low complexity; that stretch reads ARPAVKKPAGAAAPATTQAPAGA. Gly residues predominate over residues 355–368; it reads SSGGVDRGWRGGPK. The tr-type G domain maps to 471–640; that stretch reads PRPPVVTVMG…LLQAEVLELK (170 aa). Residues 480–487 form a G1 region; that stretch reads GHVDHGKT. 480-487 serves as a coordination point for GTP; that stretch reads GHVDHGKT. Residues 505 to 509 are G2; sequence GITQH. Residues 526-529 are G3; the sequence is DTPG. GTP contacts are provided by residues 526–530 and 580–583; these read DTPGH and NKID. A G4 region spans residues 580–583; the sequence is NKID. The interval 616–618 is G5; that stretch reads SAK.

Belongs to the TRAFAC class translation factor GTPase superfamily. Classic translation factor GTPase family. IF-2 subfamily.

The protein resides in the cytoplasm. Functionally, one of the essential components for the initiation of protein synthesis. Protects formylmethionyl-tRNA from spontaneous hydrolysis and promotes its binding to the 30S ribosomal subunits. Also involved in the hydrolysis of GTP during the formation of the 70S ribosomal complex. This chain is Translation initiation factor IF-2, found in Burkholderia cenocepacia (strain ATCC BAA-245 / DSM 16553 / LMG 16656 / NCTC 13227 / J2315 / CF5610) (Burkholderia cepacia (strain J2315)).